Here is a 601-residue protein sequence, read N- to C-terminus: DNA topoisomerase I, mitochondrial (601 aa).

A mitochondrion-targeting transit peptide spans 1–50; sequence MRVVRLLRLRAALTLLGEVPRRPASRGVPGSRRTQKGSGARWEKEKHEDG. Residues 22–48 form a disordered region; sequence RPASRGVPGSRRTQKGSGARWEKEKHE. Interaction with DNA stretches follow at residues 261–262, 324–329, and 421–423; these read KY, RAGNEK, and TAK. Residues 268–601 form the Topo IB-type catalytic domain; that stretch reads CSKLKGETAW…LAMAGEDFEF (334 aa). Residue Y559 is the O-(3'-phospho-DNA)-tyrosine intermediate of the active site.

This sequence belongs to the type IB topoisomerase family. Ca(2+) serves as cofactor. Mg(2+) is required as a cofactor. As to expression, ubiquitous; highest in skeletal muscle, heart, brain and fetal liver.

It is found in the mitochondrion. The enzyme catalyses ATP-independent breakage of single-stranded DNA, followed by passage and rejoining.. Releases the supercoiling and torsional tension of DNA introduced during duplication of mitochondrial DNA by transiently cleaving and rejoining one strand of the DNA duplex. Introduces a single-strand break via transesterification at a target site in duplex DNA. The scissile phosphodiester is attacked by the catalytic tyrosine of the enzyme, resulting in the formation of a DNA-(3'-phosphotyrosyl)-enzyme intermediate and the expulsion of a 5'-OH DNA strand. The free DNA strand then rotates around the intact phosphodiester bond on the opposing strand, thus removing DNA supercoils. Finally, in the religation step, the DNA 5'-OH attacks the covalent intermediate to expel the active-site tyrosine and restore the DNA phosphodiester backbone. This is DNA topoisomerase I, mitochondrial (TOP1MT) from Homo sapiens (Human).